The sequence spans 76 residues: Glutathione S-transferase (76 aa).

Residues 1 to 40 form the GST N-terminal domain; that stretch reads XVAFETVPVDLMKGEHKQPAYLALQPFGTVPAVVDGDYXL. The GST C-terminal domain occupies 41–76; the sequence is LSAVLDVYEAHLHGYLAGDFVSLADLAHLPFTDYLV.

The protein belongs to the GST superfamily. Theta family.

The protein localises to the cytoplasm. It catalyses the reaction RX + glutathione = an S-substituted glutathione + a halide anion + H(+). Its function is as follows. Conjugation of reduced glutathione to a wide number of exogenous and endogenous hydrophobic electrophiles. The chain is Glutathione S-transferase from Brassica oleracea var. italica (Broccoli).